The chain runs to 402 residues: Protein DesVIII (402 aa).

This sequence belongs to the cytochrome P450 family. Forms a complex with DesVII.

Its pathway is antibiotic biosynthesis. In terms of biological role, involved in the biosynthesis of the macrolide antibiotics methymycin, neomethymycin, narbomycin, and pikromycin. DesVIII assists the folding of the DesVII polypeptide. However, unlike chaperones, it remains bound to DesVII during catalysis, forming a tight DesVII/DesVIII complex. Although the formation of the DesVII/DesVIII complex is essential for the catalytic activity, DesVIII is unlikely to be involved in catalysis directly. This chain is Protein DesVIII, found in Streptomyces venezuelae.